A 104-amino-acid chain; its full sequence is Large ribosomal subunit protein uL23 (104 aa).

Belongs to the universal ribosomal protein uL23 family. In terms of assembly, part of the 50S ribosomal subunit. Contacts protein L29, and trigger factor when it is bound to the ribosome.

Functionally, one of the early assembly proteins it binds 23S rRNA. One of the proteins that surrounds the polypeptide exit tunnel on the outside of the ribosome. Forms the main docking site for trigger factor binding to the ribosome. The protein is Large ribosomal subunit protein uL23 of Ralstonia pickettii (strain 12J).